We begin with the raw amino-acid sequence, 279 residues long: Type II iodothyronine deiodinase (279 aa).

Over 1–7 (MGLLSAD) the chain is Lumenal. The helical; Signal-anchor for type III membrane protein transmembrane segment at 8 to 28 (LLITLQILPVFFSNCLFLALY) threads the bilayer. Topologically, residues 29–279 (DSVILLKHMV…TEDLSTDVSL (251 aa)) are cytoplasmic. Sec132 is a catalytic residue. Residues Sec132 and Sec265 are each a non-standard amino acid (selenocysteine).

Belongs to the iodothyronine deiodinase family. As to quaternary structure, predominantly monomer. Can form homodimers but homodimerization is not essential for enzyme activity. Highly expressed in liver and in various parts of the brain including telencephalon, hippocampus, cerebellum, and brain stem, and weakly expressed in thyroid, lung, and small intestine. Not detected in skeletal muscle, heart atria or ventricle, gizzard or kidney.

It localises to the endoplasmic reticulum membrane. It catalyses the reaction 3,3',5-triiodo-L-thyronine + iodide + A + H(+) = L-thyroxine + AH2. The catalysed reaction is 3,3'-diiodo-L-thyronine + iodide + A + H(+) = 3,3',5'-triiodo-L-thyronine + AH2. It carries out the reaction 3'-iodo-L-thyronine + iodide + A + H(+) = 3',5'-diiodo-L-thyronine + AH2. The enzyme catalyses 3,3'-diiodothyronamine + iodide + A + H(+) = 3,3',5'-triiodothyronamine + AH2. It catalyses the reaction 3'-iodothyronamine + iodide + A + H(+) = 3',5'-diiodothyronamine + AH2. Not inhibited by N(6)-propylthiouracil. Functionally, plays a crucial role in the metabolism of thyroid hormones (TH) and has specific roles in TH activation and inactivation by deiodination. Catalyzes the deiodination of L-thyroxine (T4) to 3,5,3'-triiodothyronine (T3) and 3,3',5'-triiodothyronine (rT3) to 3,3'-diiodothyronine (3,3'-T2) via outer-ring deiodination (ORD). Catalyzes the deiodination of 3',5'-diiodothyronine (3',5'-T2) to 3'-monoiodothyronine (3'-T1) via ORD. Catalyzes the phenolic ring deiodinations of 3,3',5'-triiodothyronamine and 3',5'- diiodothyronamine. The protein is Type II iodothyronine deiodinase (DIO2) of Gallus gallus (Chicken).